The following is a 92-amino-acid chain: Small ribosomal subunit protein bS20 (92 aa).

The disordered stretch occupies residues 1–24 (MANTTSAKKATRKIARRTDVNKAR).

The protein belongs to the bacterial ribosomal protein bS20 family.

Binds directly to 16S ribosomal RNA. The polypeptide is Small ribosomal subunit protein bS20 (Rhizobium etli (strain ATCC 51251 / DSM 11541 / JCM 21823 / NBRC 15573 / CFN 42)).